The sequence spans 62 residues: Andropin (62 aa).

The signal sequence occupies residues Met1–Ala22.

This sequence belongs to the andropin family. Ejaculatory duct of adult males.

It localises to the secreted. Male-specific peptide with moderate activity against Gram-positive bacteria. The chain is Andropin (Anp) from Drosophila teissieri (Fruit fly).